A 1775-amino-acid chain; its full sequence is ATP-dependent RNA helicase DEAH12, chloroplastic (1775 aa).

Residues 1–33 (MRNSFPPSDGGRSATDRRQQSSHSSSTNRYNSR) constitute a chloroplast transit peptide. Positions 1 to 77 (MRNSFPPSDG…NPSSGYSPPV (77 aa)) are disordered. Low complexity predominate over residues 21–34 (SSHSSSTNRYNSRS). Over residues 35–60 (AQSSPPLNHRPTWNQQHSQYPNSNFP) the composition is skewed to polar residues. Positions 316 to 480 (LKKIHREQIM…FFSCGILLVN (165 aa)) constitute a Helicase ATP-binding domain. Residue 329 to 336 (GETGSGKS) participates in ATP binding. The short motif at 427 to 430 (DEAH) is the DEAH box element. The region spanning 510 to 676 (DVVKMAVEIH…VALLRMLALG (167 aa)) is the Helicase C-terminal domain. Residues 1560 to 1767 (IEVECPICLS…EPCYAHLRTI (208 aa)) are TRIAD supradomain. Residues C1564, C1567, C1580, H1582, C1585, C1588, C1607, C1612, C1652, C1657, C1675, C1678, C1683, C1686, H1691, C1696, C1722, and C1725 each contribute to the Zn(2+) site. The segment at 1564–1612 (CPICLSEVDDGYSLEGCSHLFCKACLLEQFEASMRNFDAFPILCSHIDC) adopts an RING-type 1 zinc-finger fold. The IBR-type zinc-finger motif lies at 1631–1696 (DELFSASLSS…HLEYHPLITC (66 aa)). The segment at 1722 to 1750 (CPICKSTIEKTDGCNHMKCRCGKHICWTC) adopts an RING-type 2; atypical zinc-finger fold. The active site involves C1735. Positions 1740 and 1742 each coordinate Zn(2+).

The protein belongs to the DEAD box helicase family. DEAH subfamily.

It is found in the plastid. The protein localises to the chloroplast. It carries out the reaction ATP + H2O = ADP + phosphate + H(+). The protein is ATP-dependent RNA helicase DEAH12, chloroplastic of Arabidopsis thaliana (Mouse-ear cress).